Here is a 291-residue protein sequence, read N- to C-terminus: D-alanine--D-alanine ligase (291 aa).

Positions 99–291 (KRIVKSLGIN…FKKLISIIIT (193 aa)) constitute an ATP-grasp domain. ATP is bound at residue 125 to 179 (EWNKFPAVVKPVREGSSVGLKIVESLEELKEYALDLLKKTERVMVEEFVEGRDMT). 3 residues coordinate Mg(2+): D245, E258, and N260.

It belongs to the D-alanine--D-alanine ligase family. The cofactor is Mg(2+). Requires Mn(2+) as cofactor.

It is found in the cytoplasm. It carries out the reaction 2 D-alanine + ATP = D-alanyl-D-alanine + ADP + phosphate + H(+). The protein operates within cell wall biogenesis; peptidoglycan biosynthesis. Its function is as follows. Cell wall formation. The polypeptide is D-alanine--D-alanine ligase (Aquifex aeolicus (strain VF5)).